Here is a 700-residue protein sequence, read N- to C-terminus: Polyribonucleotide nucleotidyltransferase (700 aa).

The Mg(2+) site is built by Asp-487 and Asp-493. The region spanning 554–613 is the KH domain; sequence PRLLTIKIHPDKIRDVIGKGGSTIQAITKDTGTQIDIQDDGTIVIASVNNAAAREAKRRI. The 69-residue stretch at 623–691 folds into the S1 motif domain; the sequence is GRIYEGKVAK…KQGRIRLSIK (69 aa).

It belongs to the polyribonucleotide nucleotidyltransferase family. In terms of assembly, component of the RNA degradosome, which is a multiprotein complex involved in RNA processing and mRNA degradation. It depends on Mg(2+) as a cofactor.

It localises to the cytoplasm. The catalysed reaction is RNA(n+1) + phosphate = RNA(n) + a ribonucleoside 5'-diphosphate. Its function is as follows. Involved in mRNA degradation. Catalyzes the phosphorolysis of single-stranded polyribonucleotides processively in the 3'- to 5'-direction. The protein is Polyribonucleotide nucleotidyltransferase of Xylella fastidiosa (strain M12).